A 935-amino-acid polypeptide reads, in one-letter code: Isoleucine--tRNA ligase (935 aa).

Residues 58–68 (PYANGSIHVGH) carry the 'HIGH' region motif. Glutamate 558 lines the L-isoleucyl-5'-AMP pocket. Positions 599–603 (KMSKS) match the 'KMSKS' region motif. Residue lysine 602 coordinates ATP. Cysteine 897, cysteine 900, cysteine 917, and cysteine 920 together coordinate Zn(2+).

Belongs to the class-I aminoacyl-tRNA synthetase family. IleS type 1 subfamily. As to quaternary structure, monomer. It depends on Zn(2+) as a cofactor.

It localises to the cytoplasm. It catalyses the reaction tRNA(Ile) + L-isoleucine + ATP = L-isoleucyl-tRNA(Ile) + AMP + diphosphate. Functionally, catalyzes the attachment of isoleucine to tRNA(Ile). As IleRS can inadvertently accommodate and process structurally similar amino acids such as valine, to avoid such errors it has two additional distinct tRNA(Ile)-dependent editing activities. One activity is designated as 'pretransfer' editing and involves the hydrolysis of activated Val-AMP. The other activity is designated 'posttransfer' editing and involves deacylation of mischarged Val-tRNA(Ile). The protein is Isoleucine--tRNA ligase of Francisella tularensis subsp. tularensis (strain SCHU S4 / Schu 4).